The primary structure comprises 282 residues: MSSYANHQALAGLTLGKSTDYRDTYDASLLQGVPRSLNRDPLGLKADNLPFHGTDIWTLYELSWLNAKGLPQVAVGHVELDYTSVNLIESKSFKLYLNSFNQTRFNNWDEVRQTLERDLSTCAQGKISVALYRLDELEGQPIGHFNGTCIDDQDITIDNYEFTTDYLENATSGEKVVEETLVSHLLKSNCLITHQPDWGSIQIQYRGRQIDREKLLRYLVSFRHHNEFHEQCVERIFNDLLRFCQPEKLSVYARYTRRGGLDINPWRSNSDFVPSTTRLVRQ.

A substrate-binding site is contributed by 88 to 90; the sequence is IES. An NADPH-binding site is contributed by 90–91; that stretch reads SK. Residue Cys190 is the Thioimide intermediate of the active site. Asp197 (proton donor) is an active-site residue. Residue 229 to 230 coordinates substrate; that stretch reads HE. 258–259 is a binding site for NADPH; it reads RG.

It belongs to the GTP cyclohydrolase I family. QueF type 2 subfamily. In terms of assembly, homodimer.

It localises to the cytoplasm. The catalysed reaction is 7-aminomethyl-7-carbaguanine + 2 NADP(+) = 7-cyano-7-deazaguanine + 2 NADPH + 3 H(+). Its pathway is tRNA modification; tRNA-queuosine biosynthesis. Its function is as follows. Catalyzes the NADPH-dependent reduction of 7-cyano-7-deazaguanine (preQ0) to 7-aminomethyl-7-deazaguanine (preQ1). The chain is NADPH-dependent 7-cyano-7-deazaguanine reductase from Shigella flexneri serotype 5b (strain 8401).